A 1193-amino-acid chain; its full sequence is Probable DNA-directed RNA polymerase II subunit RPB2 homolog (1193 aa).

Aspartate 808 provides a ligand contact to Mg(2+). Positions 1137, 1140, 1155, and 1158 each coordinate Zn(2+). A C4-type zinc finger spans residues 1137–1158 (CVPCKSYFKVVKTQNGFFCSGC).

Belongs to the RNA polymerase beta chain family.

The enzyme catalyses RNA(n) + a ribonucleoside 5'-triphosphate = RNA(n+1) + diphosphate. Component of the DNA-dependent RNA polymerase that catalyzes the transcription of DNA into RNA using the four ribonucleoside triphosphates as substrates. Second largest component of RNA polymerase II which synthesizes mRNA precursors and many functional non-coding RNAs. Proposed to contribute to the polymerase catalytic activity and forms the polymerase active center together with the largest subunit. In Invertebrate iridescent virus 6 (IIV-6), this protein is Probable DNA-directed RNA polymerase II subunit RPB2 homolog.